The sequence spans 274 residues: 2,3,4,5-tetrahydropyridine-2,6-dicarboxylate N-succinyltransferase (274 aa).

Substrate-binding residues include Arg104 and Asp141.

Belongs to the transferase hexapeptide repeat family. In terms of assembly, homotrimer.

Its subcellular location is the cytoplasm. It carries out the reaction (S)-2,3,4,5-tetrahydrodipicolinate + succinyl-CoA + H2O = (S)-2-succinylamino-6-oxoheptanedioate + CoA. It participates in amino-acid biosynthesis; L-lysine biosynthesis via DAP pathway; LL-2,6-diaminopimelate from (S)-tetrahydrodipicolinate (succinylase route): step 1/3. The sequence is that of 2,3,4,5-tetrahydropyridine-2,6-dicarboxylate N-succinyltransferase from Yersinia pestis.